A 247-amino-acid polypeptide reads, in one-letter code: Type II restriction enzyme SmaI (247 aa).

It depends on Mg(2+) as a cofactor. Requires K(+) as cofactor.

The enzyme catalyses Endonucleolytic cleavage of DNA to give specific double-stranded fragments with terminal 5'-phosphates.. In terms of biological role, a P subtype restriction enzyme that recognizes the double-stranded sequence 5'-CCCGGG-3' and cleaves after C-3. The chain is Type II restriction enzyme SmaI (smaIR) from Serratia marcescens.